Consider the following 338-residue polypeptide: Cytoskeleton protein RodZ (338 aa).

At 1-111 (MNTEASQDQT…LGKKHKKRDG (111 aa)) the chain is on the cytoplasmic side. The 61-residue stretch at 19–79 (LRQAREALGL…KLVHLPEDEL (61 aa)) folds into the HTH cro/C1-type domain. Positions 30-49 (QQMVAERLCLKVSTIRDIEE) form a DNA-binding region, H-T-H motif. Residues 112–132 (WLMSFTWLIVLVVLGLTGAWW) traverse the membrane as a helical; Signal-anchor for type II membrane protein segment. Residues 133 to 338 (WQNHQAQQAE…RVARLTVGVE (206 aa)) are Periplasmic-facing. 2 stretches are compositionally biased toward polar residues: residues 151–163 (SAQL…QSVP) and 180–195 (PVAN…NGTV). Positions 151–253 (SAQLSQNGGQ…LPTADAGVTG (103 aa)) are disordered. Low complexity predominate over residues 196–209 (PATSSAAPADTANN). A compositionally biased stretch (polar residues) spans 210 to 241 (GVNTTAPQGTTSAESAVVSPSQAPLPSVSTAQ).

This sequence belongs to the RodZ family.

It localises to the cell inner membrane. Its function is as follows. Cytoskeletal protein that is involved in cell-shape control through regulation of the length of the long axis. This chain is Cytoskeleton protein RodZ, found in Yersinia enterocolitica serotype O:8 / biotype 1B (strain NCTC 13174 / 8081).